Consider the following 431-residue polypeptide: Divalent metal cation transporter MntH (431 aa).

Helical transmembrane passes span 33–53, 61–81, 110–130, 141–161, 170–190, 211–231, 258–278, 307–327, 347–367, 368–388, and 406–426; these read LLKFLGPAFVVSVAYIDPGNF, SSFNYNLIWVILWSNLMAIFL, WIFWIVGELGAMATDLAEFIG, IPMIYAGLLTGVLTFIIVYME, TIIAALIAVICVAYTIELFLA, AVLIAVGMLGATVMPHVIYLH, ILIAMNIAFVVNAAMVIVSAA, GAFGIALLASGLSSSAVGTMA, IITMLPALIIIALGINPMRVL, VLSQVALSFILPFPIIQMLLI, and IVGFIIATMIILLNIILLYLT.

Belongs to the NRAMP family.

It localises to the cell membrane. In terms of biological role, h(+)-stimulated, divalent metal cation uptake system. The chain is Divalent metal cation transporter MntH from Clostridium acetobutylicum (strain ATCC 824 / DSM 792 / JCM 1419 / IAM 19013 / LMG 5710 / NBRC 13948 / NRRL B-527 / VKM B-1787 / 2291 / W).